Reading from the N-terminus, the 197-residue chain is uncharacterized protein (197 aa).

The chain crosses the membrane as a helical span at residues 103-123 (LAIVLPVLANLIMCAMLAWYL).

The protein resides in the host membrane. This is an uncharacterized protein from Equus caballus (Horse).